We begin with the raw amino-acid sequence, 224 residues long: Ribonuclease HII (224 aa).

The region spanning 17–201 (GTVIGVDEAG…VLSNLSVKKV (185 aa)) is the RNase H type-2 domain. Positions 23, 24, and 111 each coordinate a divalent metal cation.

The protein belongs to the RNase HII family. Mn(2+) is required as a cofactor. Mg(2+) serves as cofactor.

It localises to the cytoplasm. The catalysed reaction is Endonucleolytic cleavage to 5'-phosphomonoester.. In terms of biological role, endonuclease that specifically degrades the RNA of RNA-DNA hybrids. The polypeptide is Ribonuclease HII (Pseudothermotoga lettingae (strain ATCC BAA-301 / DSM 14385 / NBRC 107922 / TMO) (Thermotoga lettingae)).